A 371-amino-acid polypeptide reads, in one-letter code: Carbamoyl phosphate synthase small chain (371 aa).

A CPSase region spans residues 1–190 (MRKTAILALE…LYRENEKPLV (190 aa)). Ser47, Gly237, and Gly239 together coordinate L-glutamine. The 183-residue stretch at 189 to 371 (LVAVIDFGVK…FKEFVKMAQG (183 aa)) folds into the Glutamine amidotransferase type-1 domain. Cys264 functions as the Nucleophile in the catalytic mechanism. L-glutamine-binding residues include Leu265, Gln268, Asn306, and Phe309. Catalysis depends on residues His348 and Glu350.

The protein belongs to the CarA family. Composed of two chains; the small (or glutamine) chain promotes the hydrolysis of glutamine to ammonia, which is used by the large (or ammonia) chain to synthesize carbamoyl phosphate. Tetramer of heterodimers (alpha,beta)4.

It catalyses the reaction hydrogencarbonate + L-glutamine + 2 ATP + H2O = carbamoyl phosphate + L-glutamate + 2 ADP + phosphate + 2 H(+). The catalysed reaction is L-glutamine + H2O = L-glutamate + NH4(+). It participates in amino-acid biosynthesis; L-arginine biosynthesis; carbamoyl phosphate from bicarbonate: step 1/1. It functions in the pathway pyrimidine metabolism; UMP biosynthesis via de novo pathway; (S)-dihydroorotate from bicarbonate: step 1/3. Functionally, small subunit of the glutamine-dependent carbamoyl phosphate synthetase (CPSase). CPSase catalyzes the formation of carbamoyl phosphate from the ammonia moiety of glutamine, carbonate, and phosphate donated by ATP, constituting the first step of 2 biosynthetic pathways, one leading to arginine and/or urea and the other to pyrimidine nucleotides. The small subunit (glutamine amidotransferase) binds and cleaves glutamine to supply the large subunit with the substrate ammonia. In Aquifex aeolicus (strain VF5), this protein is Carbamoyl phosphate synthase small chain.